A 231-amino-acid polypeptide reads, in one-letter code: NADH-ubiquinone oxidoreductase chain 4 (231 aa).

Transmembrane regions (helical) follow at residues Pro1–Ile21, Met34–Leu54, Ile63–Gly85, Gly89–Tyr111, Ile118–Leu138, and Leu156–Ser176.

It belongs to the complex I subunit 4 family.

It is found in the mitochondrion membrane. It catalyses the reaction a ubiquinone + NADH + 5 H(+)(in) = a ubiquinol + NAD(+) + 4 H(+)(out). Functionally, core subunit of the mitochondrial membrane respiratory chain NADH dehydrogenase (Complex I) that is believed to belong to the minimal assembly required for catalysis. Complex I functions in the transfer of electrons from NADH to the respiratory chain. The immediate electron acceptor for the enzyme is believed to be ubiquinone. The polypeptide is NADH-ubiquinone oxidoreductase chain 4 (MT-ND4) (Calloselasma rhodostoma (Malayan pit viper)).